A 236-amino-acid chain; its full sequence is Sugar fermentation stimulation protein homolog (236 aa).

Belongs to the SfsA family.

In Desulfotalea psychrophila (strain LSv54 / DSM 12343), this protein is Sugar fermentation stimulation protein homolog.